The following is a 592-amino-acid chain: A-type ATP synthase subunit A (592 aa).

234 to 241 (GAFGTGKT) contributes to the ATP binding site.

The protein belongs to the ATPase alpha/beta chains family. Has multiple subunits with at least A(3), B(3), C, D, E, F, H, I and proteolipid K(x).

Its subcellular location is the cell membrane. The enzyme catalyses ATP + H2O + 4 H(+)(in) = ADP + phosphate + 5 H(+)(out). Its function is as follows. Component of the A-type ATP synthase that produces ATP from ADP in the presence of a proton gradient across the membrane. The A chain is the catalytic subunit. The protein is A-type ATP synthase subunit A of Nitrosopumilus maritimus (strain SCM1).